We begin with the raw amino-acid sequence, 173 residues long: NAD(P)H-quinone oxidoreductase subunit J (173 aa).

Belongs to the complex I 30 kDa subunit family. NDH-1 can be composed of about 15 different subunits; different subcomplexes with different compositions have been identified which probably have different functions.

The protein localises to the cellular thylakoid membrane. It catalyses the reaction a plastoquinone + NADH + (n+1) H(+)(in) = a plastoquinol + NAD(+) + n H(+)(out). The enzyme catalyses a plastoquinone + NADPH + (n+1) H(+)(in) = a plastoquinol + NADP(+) + n H(+)(out). Its function is as follows. NDH-1 shuttles electrons from an unknown electron donor, via FMN and iron-sulfur (Fe-S) centers, to quinones in the respiratory and/or the photosynthetic chain. The immediate electron acceptor for the enzyme in this species is believed to be plastoquinone. Couples the redox reaction to proton translocation, and thus conserves the redox energy in a proton gradient. Cyanobacterial NDH-1 also plays a role in inorganic carbon-concentration. In Prochlorococcus marinus (strain NATL2A), this protein is NAD(P)H-quinone oxidoreductase subunit J.